A 130-amino-acid chain; its full sequence is Profilin-12 (130 aa).

The cysteines at positions 13 and 115 are disulfide-linked. The Involved in PIP2 interaction signature appears at 81–97; the sequence is AVIRGKKGSGGITVKKT. Position 111 is a phosphothreonine (Thr111).

It belongs to the profilin family. In terms of assembly, occurs in many kinds of cells as a complex with monomeric actin in a 1:1 ratio. In terms of processing, phosphorylated by MAP kinases.

Its subcellular location is the cytoplasm. The protein resides in the cytoskeleton. Functionally, binds to actin and affects the structure of the cytoskeleton. At high concentrations, profilin prevents the polymerization of actin, whereas it enhances it at low concentrations. This is Profilin-12 from Zea mays (Maize).